The primary structure comprises 98 residues: Large ribosomal subunit protein uL23 (98 aa).

It belongs to the universal ribosomal protein uL23 family. In terms of assembly, part of the 50S ribosomal subunit. Contacts protein L29, and trigger factor when it is bound to the ribosome.

In terms of biological role, one of the early assembly proteins it binds 23S rRNA. One of the proteins that surrounds the polypeptide exit tunnel on the outside of the ribosome. Forms the main docking site for trigger factor binding to the ribosome. The chain is Large ribosomal subunit protein uL23 from Bordetella bronchiseptica (strain ATCC BAA-588 / NCTC 13252 / RB50) (Alcaligenes bronchisepticus).